The primary structure comprises 419 residues: G protein-activated inward rectifier potassium channel 4 (419 aa).

Residues 1–86 (MAGDSRNAMN…LFTTLVDLKW (86 aa)) lie on the Cytoplasmic side of the membrane. Position 5 is a phosphoserine (serine 5). A helical membrane pass occupies residues 87 to 111 (RFNLLVFTMVYTVTWLFFGFIWWLI). Residues 112–135 (AYIRGDLDHVGDQEWIPCVENLSG) lie on the Extracellular side of the membrane. The helical; Pore-forming intramembrane region spans 136–147 (FVSAFLFSIETE). The segment at residues 148 to 154 (TTIGYGF) is an intramembrane region (pore-forming). The Selectivity filter motif lies at 149-154 (TIGYGF). The Extracellular segment spans residues 155-163 (RVITEKCPE). Residues 164–185 (GIILLLVQAILGSIVNAFMVGC) traverse the membrane as a helical segment. At 186 to 419 (MFVKISQPKK…GGSREARGSV (234 aa)) the chain is on the cytoplasmic side. Residues 390 to 419 (AEAGLDAEAEQNEEDEPKGLGGSREARGSV) are disordered. Residues 394–405 (LDAEAEQNEEDE) show a composition bias toward acidic residues.

This sequence belongs to the inward rectifier-type potassium channel (TC 1.A.2.1) family. KCNJ5 subfamily. Associates with KCNJ3/GIRK1 to form a G-protein-activated heteromultimer pore-forming unit. The resulting inward current is much larger. Associates with KCNJ6/GIRK2 to form a G-protein-activated heteromultimer pore-forming unit. As to expression, islets, exocrine pancreas and heart. Expressed in the adrenal cortex, particularly the zona glomerulosa.

It is found in the membrane. It catalyses the reaction K(+)(in) = K(+)(out). Heteromultimer composed of KCNJ3/GIRK1 and KCNJ5/GIRK4 is activated by phosphatidylinositol 4,5 biphosphate (PtdIns(4,5)P2). In terms of biological role, inward rectifier potassium channels are characterized by a greater tendency to allow potassium to flow into the cell rather than out of it. Their voltage dependence is regulated by the concentration of extracellular potassium; as external potassium is raised, the voltage range of the channel opening shifts to more positive voltages. The inward rectification is mainly due to the blockage of outward current by internal magnesium. Can be blocked by external barium. This potassium channel is controlled by G proteins. In Homo sapiens (Human), this protein is G protein-activated inward rectifier potassium channel 4 (KCNJ5).